The sequence spans 1202 residues: Putative late blight resistance protein homolog R1B-8 (1202 aa).

Coiled coils occupy residues 345–368 and 437–459; these read RYSD…ESLQ and LRMN…RLLN. An NB-ARC domain is found at 426–741; sequence IARTSSQLAR…ISESFIKSCE (316 aa). 471–478 serves as a coordination point for ATP; that stretch reads GMPGLGKT. LRR repeat units lie at residues 865–889, 908–936, 1011–1036, 1040–1059, 1060–1084, 1086–1111, and 1128–1151; these read FKFL…LFYL, LWNL…VWDM, PIRL…ISAP, YLKL…TADH, LKHL…VSNG, FPQL…VFPN, and SCFM…VVQS.

It belongs to the disease resistance NB-LRR family.

The protein localises to the cytoplasm. The protein resides in the membrane. Its function is as follows. Confers resistance to late blight (Phytophthora infestans) races carrying the avirulence gene Avr1. Resistance proteins guard the plant against pathogens that contain an appropriate avirulence protein via an indirect interaction with this avirulence protein. That triggers a defense system including the hypersensitive response, which restricts the pathogen growth. This Solanum demissum (Wild potato) protein is Putative late blight resistance protein homolog R1B-8 (R1B-8).